Here is a 197-residue protein sequence, read N- to C-terminus: Imidazoleglycerol-phosphate dehydratase (197 aa).

The protein belongs to the imidazoleglycerol-phosphate dehydratase family.

The protein resides in the cytoplasm. The enzyme catalyses D-erythro-1-(imidazol-4-yl)glycerol 3-phosphate = 3-(imidazol-4-yl)-2-oxopropyl phosphate + H2O. Its pathway is amino-acid biosynthesis; L-histidine biosynthesis; L-histidine from 5-phospho-alpha-D-ribose 1-diphosphate: step 6/9. The chain is Imidazoleglycerol-phosphate dehydratase from Teredinibacter turnerae (strain ATCC 39867 / T7901).